The following is a 461-amino-acid chain: Argininosuccinate lyase (461 aa).

Belongs to the lyase 1 family. Argininosuccinate lyase subfamily.

It is found in the cytoplasm. It catalyses the reaction 2-(N(omega)-L-arginino)succinate = fumarate + L-arginine. It participates in amino-acid biosynthesis; L-arginine biosynthesis; L-arginine from L-ornithine and carbamoyl phosphate: step 3/3. This chain is Argininosuccinate lyase, found in Chloroflexus aurantiacus (strain ATCC 29366 / DSM 635 / J-10-fl).